A 332-amino-acid chain; its full sequence is Divalent cation transporter CmaX (332 aa).

Residues M1–I277 are Cytoplasmic-facing. The helical transmembrane segment at I278 to S286 threads the bilayer. Residues F287 to G307 lie on the Periplasmic side of the membrane. A helical transmembrane segment spans residues F308–W323. Residues W324–L332 lie on the Cytoplasmic side of the membrane.

Belongs to the CorA metal ion transporter (MIT) (TC 1.A.35) family. As to quaternary structure, homopentamer.

It localises to the cell inner membrane. The enzyme catalyses Zn(2+)(in) = Zn(2+)(out). The catalysed reaction is Cd(2+)(in) = Cd(2+)(out). It catalyses the reaction Ni(2+)(in) = Ni(2+)(out). It carries out the reaction Co(2+)(in) = Co(2+)(out). Functionally, transports divalent cations including Zn(2+), Cd(2+), Ni(2+) and Co(2+). The proton gradient has a small influence on transport suggesting that the transport is probably not proton-dependent. The chain is Divalent cation transporter CmaX from Pseudomonas aeruginosa (strain ATCC 15692 / DSM 22644 / CIP 104116 / JCM 14847 / LMG 12228 / 1C / PRS 101 / PAO1).